The chain runs to 183 residues: Large ribosomal subunit protein eL18 (183 aa).

Residues 150–183 (RHFGPAPGAPRSHTKPYVRTKGHERARPRRRSNV) are disordered. Residues 161 to 183 (SHTKPYVRTKGHERARPRRRSNV) show a composition bias toward basic residues.

It belongs to the eukaryotic ribosomal protein eL18 family.

Its subcellular location is the cytoplasm. This Spodoptera frugiperda (Fall armyworm) protein is Large ribosomal subunit protein eL18 (RpL18).